The chain runs to 89 residues: Small ribosomal subunit protein uS14 (89 aa).

Belongs to the universal ribosomal protein uS14 family. As to quaternary structure, part of the 30S ribosomal subunit. Contacts proteins S3 and S10.

Its function is as follows. Binds 16S rRNA, required for the assembly of 30S particles and may also be responsible for determining the conformation of the 16S rRNA at the A site. This chain is Small ribosomal subunit protein uS14, found in Leuconostoc mesenteroides subsp. mesenteroides (strain ATCC 8293 / DSM 20343 / BCRC 11652 / CCM 1803 / JCM 6124 / NCDO 523 / NBRC 100496 / NCIMB 8023 / NCTC 12954 / NRRL B-1118 / 37Y).